The following is a 379-amino-acid chain: NuA4 complex subunit EAF3 homolog (379 aa).

The region spanning 6 to 61 (EENEKVLVHHQNRIYEAKIIKVDPKTSKSDKKKPLYFIHYLGWKEKWNEWIEPNKI) is the Tudor-knot domain. The disordered stretch occupies residues 75-212 (TNIKASTTSL…KRNDSKSSHF (138 aa)). Residues 78–87 (KASTTSLNNK) are compositionally biased toward low complexity. A compositionally biased stretch (acidic residues) spans 111-141 (ENSDEDENESELEDGGGEDADEGGEDIEDQE). Residues 165–199 (SSSSSSSSKSNNNNNNNNNNNNNNNNNNNNNNNNN) show a composition bias toward low complexity. Residues 214–377 (STKFIDIEIP…ASSPYLKAAS (164 aa)) enclose the MRG domain.

Component of the NuA4 histone acetyltransferase complex.

Its subcellular location is the nucleus. Functionally, component of the NuA4 histone acetyltransferase complex which is involved in transcriptional activation of selected genes principally by acetylation of nucleosomal histone H4 and H2A. The NuA4 complex is also involved in DNA repair. Also a component of a complex which acts to repress transcription by deacetylation of nucleosomal histones. This Dictyostelium discoideum (Social amoeba) protein is NuA4 complex subunit EAF3 homolog.